Consider the following 567-residue polypeptide: MIFGSRRRIRGRRGRSGPMTRGLSALSRAVAVAWRRSLQLRVVALTLGLSLAVILALGFVLTSQVTNRVLDIKVRAAIDQIERARTTVSGIVNGEETRSLDSSLQLARNTLTSKTDPASGAGLAGAFDAVLMVPGDGPRAASTAGPVDQVPNALRGFVKAGQAAYQYATVQTEGFSGPALIIGTPTLSRVANLELYLIFPLASEQATITLVRGTMATGGLVLLVLLAGIALLVSRQVVVPVRSASRIAERFAEGHLSERMPVRGEDDMARLAVSFNDMAESLSRQIAQLEEFGNLQRRFTSDVSHELRTPLTTVRMAADLIYDHSADLDPTLRRSTELMVSELDRFETLLNDLLEISRHDAGVAELSVEAVDLRTTVNNALGNVGHLAEEAGIELLVDLPAEQVIAEVDARRVERILRNLIANAIDHAEHKPVRIRMAADEDTVAVTVRDYGVGLRPGEEKLVFSRFWRSDPSRVRRSGGTGLGLAISVEDARLHQGRLEAWGEPGEGACFRLTLPMVRGHKVTTSPLPMKPIPQPVLQPVAQPNPQPMPPEYKERQRPREHAEWSG.

Over residues 1-15 the composition is skewed to basic residues; that stretch reads MIFGSRRRIRGRRGR. The segment at 1-20 is disordered; sequence MIFGSRRRIRGRRGRSGPMT. The next 2 helical transmembrane spans lie at 42–62 and 213–233; these read VVAL…FVLT and GTMA…ALLV. The HAMP domain maps to 235-287; it reads RQVVVPVRSASRIAERFAEGHLSERMPVRGEDDMARLAVSFNDMAESLSRQIA. The Histidine kinase domain maps to 302–519; sequence DVSHELRTPL…CFRLTLPMVR (218 aa). At His-305 the chain carries Phosphohistidine; by autocatalysis. Positions 529 to 551 are enriched in pro residues; sequence PMKPIPQPVLQPVAQPNPQPMPP. The interval 529–567 is disordered; the sequence is PMKPIPQPVLQPVAQPNPQPMPPEYKERQRPREHAEWSG. The span at 552–567 shows a compositional bias: basic and acidic residues; sequence EYKERQRPREHAEWSG.

Interacts with MrtA. Interacts with LpqB, probably extracytoplasmically via MtrB's sensor domain. It depends on Mg(2+) as a cofactor. Ca(2+) is required as a cofactor. Post-translationally, the C-terminal domain (residues 234-567) autophosphorylates.

Its subcellular location is the cell membrane. It catalyses the reaction ATP + protein L-histidine = ADP + protein N-phospho-L-histidine.. With respect to regulation, ca(2+) ions inhibit the phosphotransfer from MtrB to MtrA. In terms of biological role, member of the two-component regulatory system MtrA/MtrB. Probably functions as a membrane-associated protein kinase that phosphorylates MtrA in response to environmental signals. Autophosphorylates and transfers phosphate to MtrA in vitro. Overexpression of MtrA alone decreases bacterial virulence in mouse infection; co-expression of MtrA and MtrB restores normal bacterial growth, suggesting that bacterial growth in macrophages requires an optimal ratio of MtrB to MtrA. Probably plays a role in cell division. The polypeptide is Sensor histidine kinase MtrB (mtrB) (Mycobacterium tuberculosis (strain ATCC 25618 / H37Rv)).